The following is a 294-amino-acid chain: Cyclin-dependent kinase A-1 (294 aa).

Residues 4–287 (YEKVEKIGEG…ARAALEHEYF (284 aa)) form the Protein kinase domain. ATP contacts are provided by residues 10–18 (IGEGTYGVV) and Lys33. The residue at position 15 (Tyr15) is a Phosphotyrosine. Asp127 acts as the Proton acceptor in catalysis. A Phosphothreonine modification is found at Thr161.

It belongs to the protein kinase superfamily. CMGC Ser/Thr protein kinase family. CDC2/CDKX subfamily. In terms of assembly, interacts with CDT1A, CYCA2-3, CYCD2-1, CYCD3-1, CYCD4-1, CYCD4-2, CYCH1-1, CYCU1-1, CYCU2-1, CYCU2-2, CYCU3-1, CYCU4-1, CYCU4-2, CYCU4-3, CKS1, KRP2/ICK2, KRP3/ICK6, KRP4/ICK7, KRP6/ICK4, KRP7/ICK5, and C-terminal domain of KRP1/ICK1. Interacts with WEE1 and TIF4A-1/EIF4A-1. Interacts with PAS2; when phosphorylated at Tyr-15. Interacts with SMR3, SMR4, SMR5, SMR6, SMR8 and At4g14310. Binds to CYCD3-2. Component of a DREAM-like complex which modulates a variety of developmentally regulated genes and of the mitotic genes in proliferating and differentiated cells. Interacts with MYB3R3 at later and with MYB3R4 at earlier stages of leaf development. May interact with SPCH. Post-translationally, phosphorylated at Tyr-15 by WEE1. Phosphorylation at Thr-161 is important for the kinase activity and substrate binding. Binding to the anti-phosphatase PAS2 prevents dephosphorylation. As to expression, expressed in roots, stems, flowers and siliques.

It localises to the cytoplasm. The protein localises to the nucleus. The catalysed reaction is L-seryl-[protein] + ATP = O-phospho-L-seryl-[protein] + ADP + H(+). It catalyses the reaction L-threonyl-[protein] + ATP = O-phospho-L-threonyl-[protein] + ADP + H(+). The enzyme catalyses [DNA-directed RNA polymerase] + ATP = phospho-[DNA-directed RNA polymerase] + ADP + H(+). CDK kinase activated by CDKF-1. CDK kinase activity inhibited by KRP1/ICK1, KRP2/ICK2, KRP3/ICK6, KRP4/ICK7, KRP5/ICK3, KRP6/ICK4 and KRP7/ICK5. Down-regulated by phosphorylation by WEE1. Its function is as follows. Involved in the control of the cell cycle. Essential for both G1/S and G2/M (mitosis) phase transitions. Functions in cell morphogenesis as well as cell proliferation. Required for cell division (entry into mitosis) of the generative cell in male gametogenesis. Required to trigger guard mother cells (GMC) symmetric divisions at the late stage of stomatal development, probably via the regulation of G1 to S transition in the cell cycle. Required for the function of SPCH in entering the stomatal lineage. Promotes divisions in the guard cells (GCs) after the guard mother cells (GMC) symmetric division when in the presence of CYCD3-2 via the phosphorylation of SPCH. In Arabidopsis thaliana (Mouse-ear cress), this protein is Cyclin-dependent kinase A-1.